A 758-amino-acid chain; its full sequence is Amyloid beta precursor protein binding family B member 2 (758 aa).

Ser-123 bears the Phosphoserine mark. The tract at residues 134–154 is disordered; that stretch reads KLEGKEPHPQDSSSCEILPSQ. At Ser-160 the chain carries Phosphoserine. Residues 176 to 190 show a composition bias toward basic and acidic residues; the sequence is EQNRGNHHGTAEEKS. 3 disordered regions span residues 176 to 195, 206 to 295, and 326 to 351; these read EQNRGNHHGTAEEKSQPVQG, LLLQ…LPPG, and DLQGSRKGSLSSVTPSPTPENEKQPW. 2 stretches are compositionally biased toward polar residues: residues 212-230 and 261-275; these read NRPQSSPEDGQVATVSSSP and SWTTLSQDSASPSSP. Residues 290 to 322 form the WW domain; sequence PDLPPGWKRVSDIAGTYYWHIPTGTTQWERPVS. A compositionally biased stretch (polar residues) spans 331–340; the sequence is RKGSLSSVTP. Phosphoserine occurs at positions 334, 409, and 412. 2 PID domains span residues 413 to 578 and 584 to 736; these read DPEA…LQVD and TELV…VTTN.

As to quaternary structure, interacts (via C-terminus) with APP (via C-terminus). Interacts with APLP2 (via cytoplasmic domain). Widely expressed.

Its subcellular location is the endoplasmic reticulum. It is found in the golgi apparatus. The protein resides in the early endosome. Functionally, plays a role in the maintenance of lens transparency, and may also play a role in muscle cell strength. Involved in hippocampal neurite branching and neuromuscular junction formation, as a result plays a role in spatial memory functioning. Activates transcription of APP. The protein is Amyloid beta precursor protein binding family B member 2 of Homo sapiens (Human).